The following is a 338-amino-acid chain: MEMO1 family protein MHO1 (338 aa).

It belongs to the MEMO1 family.

It is found in the cytoplasm. It localises to the nucleus. Plays a role in haploid invasive growth under conditions of nutrient insufficiency, suggesting that the function of the MEMO1 family in cell motility/invasion is conserved across species. The polypeptide is MEMO1 family protein MHO1 (Saccharomyces cerevisiae (strain ATCC 204508 / S288c) (Baker's yeast)).